Reading from the N-terminus, the 204-residue chain is Arginine exporter protein ArgO (204 aa).

6 helical membrane-spanning segments follow: residues 1–21, 37–57, 67–87, 111–131, 154–174, and 179–199; these read MWAV…PLGP, LMVA…GIFG, LLLG…GWGA, IIAT…DTFV, TASF…APWL, and VQRV…LQLA.

This sequence belongs to the LysE/ArgO transporter (TC 2.A.75) family.

Its subcellular location is the cell inner membrane. It catalyses the reaction L-arginine(in) = L-arginine(out). In terms of biological role, involved in the export of arginine. Important to control the intracellular level of arginine and the correct balance between arginine and lysine. This Pectobacterium atrosepticum (strain SCRI 1043 / ATCC BAA-672) (Erwinia carotovora subsp. atroseptica) protein is Arginine exporter protein ArgO.